The sequence spans 874 residues: Alanine--tRNA ligase (874 aa).

Zn(2+) is bound by residues His-562, His-566, Cys-665, and His-669.

Belongs to the class-II aminoacyl-tRNA synthetase family. Zn(2+) serves as cofactor.

The protein resides in the cytoplasm. It carries out the reaction tRNA(Ala) + L-alanine + ATP = L-alanyl-tRNA(Ala) + AMP + diphosphate. Functionally, catalyzes the attachment of alanine to tRNA(Ala) in a two-step reaction: alanine is first activated by ATP to form Ala-AMP and then transferred to the acceptor end of tRNA(Ala). Also edits incorrectly charged Ser-tRNA(Ala) and Gly-tRNA(Ala) via its editing domain. This chain is Alanine--tRNA ligase, found in Pseudomonas putida (strain GB-1).